A 351-amino-acid polypeptide reads, in one-letter code: Adenine deaminase (351 aa).

Positions 20, 22, and 200 each coordinate Zn(2+). Residue Glu203 is the Proton donor of the active site. Asp281 is a Zn(2+) binding site. A substrate-binding site is contributed by Asp282.

The protein belongs to the metallo-dependent hydrolases superfamily. Adenosine and AMP deaminases family. Adenine deaminase type 2 subfamily. Zn(2+) serves as cofactor.

The catalysed reaction is adenine + H2O + H(+) = hypoxanthine + NH4(+). In terms of biological role, catalyzes the hydrolytic deamination of adenine to hypoxanthine. Plays an important role in the purine salvage pathway and in nitrogen catabolism. The sequence is that of Adenine deaminase from Cupriavidus pinatubonensis (strain JMP 134 / LMG 1197) (Cupriavidus necator (strain JMP 134)).